The sequence spans 664 residues: Intraflagellar transport protein 70A1 (664 aa).

TPR repeat units follow at residues 11-44 (DGEF…SSRS), 45-78 (RAGL…HPEL), 153-186 (PDGL…SGYQ), 188-220 (DLSY…GIRQ), 393-423 (TKQV…EKYI), 424-456 (PVLM…CNDH), and 458-491 (VWKL…NYDN). The stretch at 507–534 (YIMTSQNEEAEELMRKIEKEEEQLSYGD) forms a coiled coil. One copy of the TPR 8 repeat lies at 543–576 (CIVNLVIGTLYCAKGNYDFGISRVIKSLEPYHKK).

It belongs to the TTC30/dfy-1/fleer family. As to quaternary structure, interacts wit the IFT B complex component IFT52.

It localises to the cell projection. It is found in the cilium. Functionally, required for polyglutamylation of axonemal tubulin. Plays a role in anterograde intraflagellar transport (IFT), the process by which cilia precursors are transported from the base of the cilium to the site of their incorporation at the tip. The chain is Intraflagellar transport protein 70A1 (Ift70a1) from Mus musculus (Mouse).